Consider the following 281-residue polypeptide: Large ribosomal subunit protein uL2 (281 aa).

A disordered region spans residues 208–281 (AGRSRYAGQR…RGRKRGPHTR (74 aa)). Residues 254–281 (TVGKKTRSHKARSNKFIVRGRKRGPHTR) show a composition bias toward basic residues.

The protein belongs to the universal ribosomal protein uL2 family. In terms of assembly, part of the 50S ribosomal subunit. Forms a bridge to the 30S subunit in the 70S ribosome.

Functionally, one of the primary rRNA binding proteins. Required for association of the 30S and 50S subunits to form the 70S ribosome, for tRNA binding and peptide bond formation. It has been suggested to have peptidyltransferase activity; this is somewhat controversial. Makes several contacts with the 16S rRNA in the 70S ribosome. This Limosilactobacillus fermentum (strain NBRC 3956 / LMG 18251) (Lactobacillus fermentum) protein is Large ribosomal subunit protein uL2.